The following is a 78-amino-acid chain: Protein SlyX homolog (78 aa).

This sequence belongs to the SlyX family.

The chain is Protein SlyX homolog from Xanthomonas oryzae pv. oryzae (strain MAFF 311018).